The primary structure comprises 285 residues: Undecaprenyl-diphosphatase (285 aa).

7 helical membrane-spanning segments follow: residues 40–60 (DELL…LLYF), 92–112 (LCIL…ENFI), 122–142 (SVYA…WADA), 159–179 (FLIG…RSGI), 197–217 (FSML…LLGL), 233–253 (LIVA…LMAL), and 259–279 (FLPF…TSPI).

This sequence belongs to the UppP family.

It localises to the cell inner membrane. It catalyses the reaction di-trans,octa-cis-undecaprenyl diphosphate + H2O = di-trans,octa-cis-undecaprenyl phosphate + phosphate + H(+). Functionally, catalyzes the dephosphorylation of undecaprenyl diphosphate (UPP). Confers resistance to bacitracin. The sequence is that of Undecaprenyl-diphosphatase from Hyphomonas neptunium (strain ATCC 15444).